The following is a 182-amino-acid chain: Small ribosomal subunit protein uS4c (182 aa).

A disordered region spans residues 12 to 31; sequence PGFTSKRPRSGSDLKNPLRS. Residues 82–143 enclose the S4 RNA-binding domain; sequence MRLDNILFRL…KQRSKALIQN (62 aa).

This sequence belongs to the universal ribosomal protein uS4 family. As to quaternary structure, part of the 30S ribosomal subunit. Contacts protein S5. The interaction surface between S4 and S5 is involved in control of translational fidelity.

It is found in the plastid. The protein localises to the chloroplast. One of the primary rRNA binding proteins, it binds directly to 16S rRNA where it nucleates assembly of the body of the 30S subunit. Its function is as follows. With S5 and S12 plays an important role in translational accuracy. The chain is Small ribosomal subunit protein uS4c (rps4) from Hymenocallis littoralis (Beach spider-lily).